A 570-amino-acid chain; its full sequence is MKASELFFPTLREVPSEAEVLSHQLLLRAGFIRKATAGVYSYLPLANRVLKKIMNIVREEMDRAGGQEVILPIIQPAELWKKSGRWEVYGDEMFRLKDRHNRDFALGPTHEEIITTLVDADVHSYRHLPLLLYQIQNKYRDEIRPRFGLMRGREFIMKDLYSFDIDEEGLDISYHKMYEAYNRIFQRLKLQYRVVEADSGAIGGNESHEFMVLAENGEAEIVYCKNCDYGANTEKAVCSLEEPKVTEEEQLELEKVHTPGQRTIQDLVDYMNIPKEKQIKTLIYYADEELVAAIVRGDRELNEIKFKNVLGCNQLFMADETAVKQLCSAGFGSLGPVGLPLKTYIDLEVSQMKNFACGANEDDYHFINVNLGRDFTPAGINDIRNAVAGDSCPVCSAPLYSMRGIEVGHIFKLGTKYSEVLEANYLDQKGQEKPMVMGCYGIGISRTMAAAVEQSADENGIVWPLPITPFEVIIVPVNSKNEEQMQAAWSLYEEFKQEGLETIVDDRDERAGVKFKDADLIGIPLRITIGPRSLQEKQVEVKKRSDKDIELVPLDAVSSRVKLMLKEMSK.

Belongs to the class-II aminoacyl-tRNA synthetase family. ProS type 1 subfamily. In terms of assembly, homodimer.

The protein localises to the cytoplasm. The catalysed reaction is tRNA(Pro) + L-proline + ATP = L-prolyl-tRNA(Pro) + AMP + diphosphate. Its function is as follows. Catalyzes the attachment of proline to tRNA(Pro) in a two-step reaction: proline is first activated by ATP to form Pro-AMP and then transferred to the acceptor end of tRNA(Pro). As ProRS can inadvertently accommodate and process non-cognate amino acids such as alanine and cysteine, to avoid such errors it has two additional distinct editing activities against alanine. One activity is designated as 'pretransfer' editing and involves the tRNA(Pro)-independent hydrolysis of activated Ala-AMP. The other activity is designated 'posttransfer' editing and involves deacylation of mischarged Ala-tRNA(Pro). The misacylated Cys-tRNA(Pro) is not edited by ProRS. This Syntrophomonas wolfei subsp. wolfei (strain DSM 2245B / Goettingen) protein is Proline--tRNA ligase.